Reading from the N-terminus, the 169-residue chain is Peptide deformylase (169 aa).

Fe cation contacts are provided by Cys91 and His133. Glu134 is an active-site residue. Position 137 (His137) interacts with Fe cation.

Belongs to the polypeptide deformylase family. Requires Fe(2+) as cofactor.

The catalysed reaction is N-terminal N-formyl-L-methionyl-[peptide] + H2O = N-terminal L-methionyl-[peptide] + formate. In terms of biological role, removes the formyl group from the N-terminal Met of newly synthesized proteins. Requires at least a dipeptide for an efficient rate of reaction. N-terminal L-methionine is a prerequisite for activity but the enzyme has broad specificity at other positions. The sequence is that of Peptide deformylase from Klebsiella pneumoniae subsp. pneumoniae (strain ATCC 700721 / MGH 78578).